Reading from the N-terminus, the 401-residue chain is MAMSGTFHLTSDYVPGYTLSDSRCFFNSAVSRRTLAILPCSSCLDHKNGRLKSVPNRSSFVCRASSGGYRRNPDFSRLNKHGYRGNNRQSGGREDFDIENSDMLSSRNGPLFNLSSSPKFQATSSPGPREKEIVELFRKVQAQLRARAAAKKEEKKIEEASKGQGKESETVDSLLKLLRKHSGEQSKRQVSKFSSQGEVQGDTVDKQDRTGNLVTSGNKDNNASSFTRPTSSFRRKSPVPRSQSPPAYSSEATFDQSSSYSVTWTQKKDTVELHDEPEHEPAYEHEHEPENESEPGPVTTMLEPDSELKPESSSFYQEEEDDDVTFDVLSQDDGILDVLSDDDESLDDADEDSDEAEEEAVKDLSELKLVELRGIAKSRGLKGLSKMKKAELVELLGSDSS.

Residues 1 to 63 constitute a chloroplast transit peptide; sequence MAMSGTFHLT…VPNRSSFVCR (63 aa). 2 disordered regions span residues 73–129 and 180–361; these read PDFS…PGPR and KHSG…EEAV. 3 stretches are compositionally biased toward polar residues: residues 102–126, 210–223, and 240–265; these read DMLS…TSSP, TGNL…DNNA, and PRSQ…VTWT. Residues 266–290 are compositionally biased toward basic and acidic residues; the sequence is QKKDTVELHDEPEHEPAYEHEHEPE. The segment covering 339-358 has biased composition (acidic residues); the sequence is LSDDDESLDDADEDSDEAEE. A coiled-coil region spans residues 339-371; sequence LSDDDESLDDADEDSDEAEEEAVKDLSELKLVE.

Homodimer or homomultimer. Part of a chloroplastic degradosome-like complex. Interacts with RNE.

The protein resides in the plastid. Its subcellular location is the chloroplast. Binds to and supports processing of specific plastid RNAs. Associates via its C-terminal Rho-N domain to single stranded regions of 16S and 23S rRNAs or to rbcL mRNAs. May be involved in targeting transcripts to RNases such as RNE or RNase J. This chain is Rho-N domain-containing protein 1, chloroplastic (RHON1), found in Arabidopsis thaliana (Mouse-ear cress).